We begin with the raw amino-acid sequence, 405 residues long: Phosphoglycerate kinase (405 aa).

Residues 24-26 (DFN), Arg40, 63-66 (HLGR), Arg122, and Arg162 contribute to the substrate site. ATP-binding positions include Lys212, Glu331, and 361-364 (GGDS).

This sequence belongs to the phosphoglycerate kinase family. Monomer.

Its subcellular location is the cytoplasm. It catalyses the reaction (2R)-3-phosphoglycerate + ATP = (2R)-3-phospho-glyceroyl phosphate + ADP. It participates in carbohydrate degradation; glycolysis; pyruvate from D-glyceraldehyde 3-phosphate: step 2/5. In Corynebacterium glutamicum (strain ATCC 13032 / DSM 20300 / JCM 1318 / BCRC 11384 / CCUG 27702 / LMG 3730 / NBRC 12168 / NCIMB 10025 / NRRL B-2784 / 534), this protein is Phosphoglycerate kinase (pgk).